Here is a 284-residue protein sequence, read N- to C-terminus: Spermidine synthase (284 aa).

Positions 6–241 constitute a PABS domain; sequence NGWFSEISEF…GSIGFILCSL (236 aa). Position 37 (glutamine 37) interacts with S-adenosyl 3-(methylsulfanyl)propylamine. Position 67 (tyrosine 67) interacts with putrescine. Residues glutamine 68, aspartate 92, glutamate 112, 143 to 144, and aspartate 161 each bind S-adenosyl 3-(methylsulfanyl)propylamine; that span reads DG. Aspartate 161 acts as the Proton acceptor in catalysis. Putrescine is bound by residues 161–164 and tyrosine 229; that span reads DSSD.

Belongs to the spermidine/spermine synthase family.

It catalyses the reaction S-adenosyl 3-(methylsulfanyl)propylamine + putrescine = S-methyl-5'-thioadenosine + spermidine + H(+). Its pathway is amine and polyamine biosynthesis; spermidine biosynthesis; spermidine from putrescine: step 1/1. Catalyzes the production of spermidine from putrescine and decarboxylated S-adenosylmethionine (dcSAM). Has a strong preference for putrescine as substrate. The chain is Spermidine synthase (spsA) from Dictyostelium discoideum (Social amoeba).